The chain runs to 441 residues: Protein arginine methyltransferase NDUFAF7, mitochondrial (441 aa).

A mitochondrion-targeting transit peptide spans 1–46 (MSVLLRSGLGPLCAVARAAIPFIWRGKYFSSGNEPAENPVTPMLRH).

Belongs to the NDUFAF7 family. In terms of assembly, interacts with NDUFS2.

It localises to the mitochondrion. It carries out the reaction L-arginyl-[protein] + 2 S-adenosyl-L-methionine = N(omega),N(omega)'-dimethyl-L-arginyl-[protein] + 2 S-adenosyl-L-homocysteine + 2 H(+). Arginine methyltransferase involved in the assembly or stability of mitochondrial NADH:ubiquinone oxidoreductase complex (complex I). Acts by mediating symmetric dimethylation of 'Arg-118' of NDUFS2 after it assembles into the complex I, stabilizing the early intermediate complex. The chain is Protein arginine methyltransferase NDUFAF7, mitochondrial from Homo sapiens (Human).